The sequence spans 384 residues: Lipoyl synthase 2, chloroplastic (384 aa).

The transit peptide at 1–48 (MAAYCSRVYHHHPVSPSTMQGSLARPSIHAGSASLTFRARPNSVSIVR) directs the protein to the chloroplast. [4Fe-4S] cluster-binding residues include Cys108, Cys113, Cys119, Cys145, Cys149, Cys152, and Ser360. Residues 128-349 (GDGDGIATAT…KEYGESLGFL (222 aa)) form the Radical SAM core domain.

This sequence belongs to the radical SAM superfamily. Lipoyl synthase family. [4Fe-4S] cluster is required as a cofactor.

The protein resides in the plastid. The protein localises to the chloroplast. The enzyme catalyses [[Fe-S] cluster scaffold protein carrying a second [4Fe-4S](2+) cluster] + N(6)-octanoyl-L-lysyl-[protein] + 2 oxidized [2Fe-2S]-[ferredoxin] + 2 S-adenosyl-L-methionine + 4 H(+) = [[Fe-S] cluster scaffold protein] + N(6)-[(R)-dihydrolipoyl]-L-lysyl-[protein] + 4 Fe(3+) + 2 hydrogen sulfide + 2 5'-deoxyadenosine + 2 L-methionine + 2 reduced [2Fe-2S]-[ferredoxin]. It functions in the pathway protein modification; protein lipoylation via endogenous pathway; protein N(6)-(lipoyl)lysine from octanoyl-[acyl-carrier-protein]: step 2/2. Catalyzes the radical-mediated insertion of two sulfur atoms into the C-6 and C-8 positions of the octanoyl moiety bound to the lipoyl domains of lipoate-dependent enzymes, thereby converting the octanoylated domains into lipoylated derivatives. In Oryza sativa subsp. indica (Rice), this protein is Lipoyl synthase 2, chloroplastic.